A 223-amino-acid polypeptide reads, in one-letter code: Kinetochore protein Spc25 (223 aa).

Residues 51–116 adopt a coiled-coil conformation; it reads RHQRKVGKLQ…QRKNEIMERI (66 aa).

The protein belongs to the SPC25 family. As to quaternary structure, component of the Ndc80 complex, which is composed of Ndc80, Nuf2 and Spc25.

Its subcellular location is the nucleus. It is found in the chromosome. The protein resides in the centromere. The protein localises to the kinetochore. Its function is as follows. Acts as a component of the essential kinetochore-associated Ndc80 complex, which is required for chromosome segregation and spindle checkpoint activity during meiosis and mitosis. Required for kinetochore integrity and the organization of stable microtubule binding sites in the outer plate of the kinetochore. Participates in SAC signaling that responds specifically to disruptions in spindle microtubule dynamics. The NDC80 complex synergistically enhances the affinity of the SKA1 complex for microtubules and may allow the NDC80 complex to track depolymerizing microtubules. The polypeptide is Kinetochore protein Spc25 (Drosophila yakuba (Fruit fly)).